Reading from the N-terminus, the 487-residue chain is Glycogen synthase 1 (487 aa).

Lys15 contributes to the ADP-alpha-D-glucose binding site.

It belongs to the glycosyltransferase 1 family. Bacterial/plant glycogen synthase subfamily.

The catalysed reaction is [(1-&gt;4)-alpha-D-glucosyl](n) + ADP-alpha-D-glucose = [(1-&gt;4)-alpha-D-glucosyl](n+1) + ADP + H(+). The protein operates within glycan biosynthesis; glycogen biosynthesis. Functionally, synthesizes alpha-1,4-glucan chains using ADP-glucose. The chain is Glycogen synthase 1 from Nitrosococcus oceani (strain ATCC 19707 / BCRC 17464 / JCM 30415 / NCIMB 11848 / C-107).